Reading from the N-terminus, the 984-residue chain is UPF0592 protein YDL073W (984 aa).

Positions 675 to 712 (KNHKIMDGYEGGQENEDNDEDSEDSGSHKNKRKEGNSS) are disordered. The segment covering 687–698 (QENEDNDEDSED) has biased composition (acidic residues).

This sequence belongs to the UPF0592 family.

This is UPF0592 protein YDL073W from Saccharomyces cerevisiae (strain ATCC 204508 / S288c) (Baker's yeast).